A 225-amino-acid chain; its full sequence is PKHD-type hydroxylase YbiX (225 aa).

One can recognise a Fe2OG dioxygenase domain in the interval 78–177 (TLSTPLFNRY…RVASFMWIQS (100 aa)). Fe cation-binding residues include His96, Asp98, and His158. Arg168 is a binding site for 2-oxoglutarate.

It depends on Fe(2+) as a cofactor. Requires L-ascorbate as cofactor.

This is PKHD-type hydroxylase YbiX from Escherichia coli O45:K1 (strain S88 / ExPEC).